Consider the following 380-residue polypeptide: Cytochrome b (380 aa).

Helical transmembrane passes span 28–48 (IGSL…FLSL), 72–93 (WLVR…YAHI), 109–129 (WLVG…GYVL), and 174–194 (FYSF…VHLL). Heme b is bound by residues His-78 and His-92. Positions 178 and 192 each coordinate heme b. His-197 lines the a ubiquinone pocket. 4 consecutive transmembrane segments (helical) span residues 222–243 (WKIL…CYIT), 285–305 (IGGV…PLAL), 317–337 (IGQL…WLGA), and 344–364 (YISL…LYMI).

Belongs to the cytochrome b family. The main subunits of complex b-c1 are: cytochrome b, cytochrome c1 and the Rieske protein. The cofactor is heme b.

It is found in the mitochondrion inner membrane. Component of the ubiquinol-cytochrome c reductase complex (complex III or cytochrome b-c1 complex) that is part of the mitochondrial respiratory chain. The b-c1 complex mediates electron transfer from ubiquinol to cytochrome c. Contributes to the generation of a proton gradient across the mitochondrial membrane that is then used for ATP synthesis. The protein is Cytochrome b (MT-CYB) of Cepaea nemoralis (Banded wood snail).